The primary structure comprises 355 residues: S-adenosylmethionine:tRNA ribosyltransferase-isomerase (355 aa).

The protein belongs to the QueA family. In terms of assembly, monomer.

The protein resides in the cytoplasm. It catalyses the reaction 7-aminomethyl-7-carbaguanosine(34) in tRNA + S-adenosyl-L-methionine = epoxyqueuosine(34) in tRNA + adenine + L-methionine + 2 H(+). The protein operates within tRNA modification; tRNA-queuosine biosynthesis. Transfers and isomerizes the ribose moiety from AdoMet to the 7-aminomethyl group of 7-deazaguanine (preQ1-tRNA) to give epoxyqueuosine (oQ-tRNA). This Burkholderia cenocepacia (strain ATCC BAA-245 / DSM 16553 / LMG 16656 / NCTC 13227 / J2315 / CF5610) (Burkholderia cepacia (strain J2315)) protein is S-adenosylmethionine:tRNA ribosyltransferase-isomerase.